The primary structure comprises 232 residues: EEF1A lysine methyltransferase 3 (232 aa).

S-adenosyl-L-methionine is bound by residues tryptophan 57, 83-85, aspartate 104, tryptophan 133, and alanine 150; that span reads GAG.

Belongs to the methyltransferase superfamily. METTL21 family. In terms of assembly, interacts with members of the heat shock protein 70 and 90 families and of the TCP-1 chaperonin family, as well as with HSPD1, STIP1 and tubulin; at least some of these proteins may be methylation substrates.

Its subcellular location is the cytoplasm. It is found in the cytoskeleton. The protein resides in the microtubule organizing center. It localises to the centrosome. It carries out the reaction L-lysyl-[protein] + 3 S-adenosyl-L-methionine = N(6),N(6),N(6)-trimethyl-L-lysyl-[protein] + 3 S-adenosyl-L-homocysteine + 3 H(+). The enzyme catalyses L-lysyl-[protein] + S-adenosyl-L-methionine = N(6)-methyl-L-lysyl-[protein] + S-adenosyl-L-homocysteine + H(+). It catalyses the reaction N(6)-methyl-L-lysyl-[protein] + S-adenosyl-L-methionine = N(6),N(6)-dimethyl-L-lysyl-[protein] + S-adenosyl-L-homocysteine + H(+). The catalysed reaction is N(6),N(6)-dimethyl-L-lysyl-[protein] + S-adenosyl-L-methionine = N(6),N(6),N(6)-trimethyl-L-lysyl-[protein] + S-adenosyl-L-homocysteine + H(+). Functionally, protein-lysine methyltransferase that selectively mono-, di- and trimethylates 'Lys-165' of the translation elongation factors EEF1A1 and EEF1A2 in an aminoacyl-tRNA and GTP-dependent manner. EEF1A1 methylation by EEF1AKMT3 is dynamic as well as inducible by stress conditions, such as ER-stress, and plays a regulatory role on mRNA translation. This chain is EEF1A lysine methyltransferase 3, found in Mus musculus (Mouse).